The sequence spans 132 residues: MAGTLQFDIVSPERRLASFAATEVQVPGTDGDMTAMEGHAPTITTLRPGILRAHGPSGVQAYAVTGGFAEINATSISVLAEKAVAVEELTGTVLDEFIAEARELASVALPEDRDMAERTLNDMLALKASSGH.

This sequence belongs to the ATPase epsilon chain family. In terms of assembly, F-type ATPases have 2 components, CF(1) - the catalytic core - and CF(0) - the membrane proton channel. CF(1) has five subunits: alpha(3), beta(3), gamma(1), delta(1), epsilon(1). CF(0) has three main subunits: a, b and c.

The protein localises to the cell inner membrane. Functionally, produces ATP from ADP in the presence of a proton gradient across the membrane. The protein is ATP synthase epsilon chain 1 of Cereibacter sphaeroides (strain ATCC 17023 / DSM 158 / JCM 6121 / CCUG 31486 / LMG 2827 / NBRC 12203 / NCIMB 8253 / ATH 2.4.1.) (Rhodobacter sphaeroides).